We begin with the raw amino-acid sequence, 612 residues long: Dihydroxy-acid dehydratase (612 aa).

Asp81 lines the Mg(2+) pocket. Residue Cys122 participates in [2Fe-2S] cluster binding. Mg(2+) is bound by residues Asp123 and Lys124. N6-carboxylysine is present on Lys124. [2Fe-2S] cluster is bound at residue Cys195. Residue Glu491 participates in Mg(2+) binding. Ser517 (proton acceptor) is an active-site residue.

Belongs to the IlvD/Edd family. As to quaternary structure, homodimer. [2Fe-2S] cluster serves as cofactor. It depends on Mg(2+) as a cofactor.

It catalyses the reaction (2R)-2,3-dihydroxy-3-methylbutanoate = 3-methyl-2-oxobutanoate + H2O. It carries out the reaction (2R,3R)-2,3-dihydroxy-3-methylpentanoate = (S)-3-methyl-2-oxopentanoate + H2O. Its pathway is amino-acid biosynthesis; L-isoleucine biosynthesis; L-isoleucine from 2-oxobutanoate: step 3/4. The protein operates within amino-acid biosynthesis; L-valine biosynthesis; L-valine from pyruvate: step 3/4. Its function is as follows. Functions in the biosynthesis of branched-chain amino acids. Catalyzes the dehydration of (2R,3R)-2,3-dihydroxy-3-methylpentanoate (2,3-dihydroxy-3-methylvalerate) into 2-oxo-3-methylpentanoate (2-oxo-3-methylvalerate) and of (2R)-2,3-dihydroxy-3-methylbutanoate (2,3-dihydroxyisovalerate) into 2-oxo-3-methylbutanoate (2-oxoisovalerate), the penultimate precursor to L-isoleucine and L-valine, respectively. The chain is Dihydroxy-acid dehydratase from Bartonella tribocorum (strain CIP 105476 / IBS 506).